A 205-amino-acid polypeptide reads, in one-letter code: Holliday junction branch migration complex subunit RuvA (205 aa).

The tract at residues 1–65 is domain I; the sequence is MIAKLKGILD…EDRIHLFGFL (65 aa). A domain II region spans residues 66–144; the sequence is DNTEKVAFNM…NINTIANNTS (79 aa). The tract at residues 145–153 is flexible linker; sequence LAILSTDSN. The interval 154–205 is domain III; that stretch reads THDNILSDAITALIALGISRAEATQILSDIYALFPSISVNELVRTALQRRAK.

This sequence belongs to the RuvA family. Homotetramer. Forms an RuvA(8)-RuvB(12)-Holliday junction (HJ) complex. HJ DNA is sandwiched between 2 RuvA tetramers; dsDNA enters through RuvA and exits via RuvB. An RuvB hexamer assembles on each DNA strand where it exits the tetramer. Each RuvB hexamer is contacted by two RuvA subunits (via domain III) on 2 adjacent RuvB subunits; this complex drives branch migration. In the full resolvosome a probable DNA-RuvA(4)-RuvB(12)-RuvC(2) complex forms which resolves the HJ.

The protein localises to the cytoplasm. The RuvA-RuvB-RuvC complex processes Holliday junction (HJ) DNA during genetic recombination and DNA repair, while the RuvA-RuvB complex plays an important role in the rescue of blocked DNA replication forks via replication fork reversal (RFR). RuvA specifically binds to HJ cruciform DNA, conferring on it an open structure. The RuvB hexamer acts as an ATP-dependent pump, pulling dsDNA into and through the RuvAB complex. HJ branch migration allows RuvC to scan DNA until it finds its consensus sequence, where it cleaves and resolves the cruciform DNA. The polypeptide is Holliday junction branch migration complex subunit RuvA (Orientia tsutsugamushi (strain Boryong) (Rickettsia tsutsugamushi)).